We begin with the raw amino-acid sequence, 745 residues long: Probable xyloglucan glycosyltransferase 3 (745 aa).

Transmembrane regions (helical) follow at residues 116–136 (GFLL…LKGW) and 196–216 (IDYI…LFMV). Asp-300 is an active-site residue. Residues Asp-359 and Asp-361 each coordinate substrate. Asp-453 is a catalytic residue. The next 4 helical transmembrane spans lie at 531–551 (LILP…TMFV), 556–576 (LPIW…ILPA), 695–715 (IFKK…RSLL), and 720–740 (LHFY…LDLI).

This sequence belongs to the glycosyltransferase 2 family. Plant cellulose synthase-like C subfamily.

The protein localises to the golgi apparatus membrane. In terms of biological role, probable beta-1,4-glucan synthase rather involved in the synthesis of the xyloglucan backbone than cellulose. Seems to work simultaneously with xyloglucan 6-xylosyltransferase. Xyloglucan is a noncellulosic polysaccharides of plant cell wall and consists of a glucan backbone substituted by xylose, galactose and fucose. In Oryza sativa subsp. japonica (Rice), this protein is Probable xyloglucan glycosyltransferase 3 (CSLC3).